Reading from the N-terminus, the 173-residue chain is Galactose-6-phosphate isomerase subunit LacB (173 aa).

This sequence belongs to the LacAB/RpiB family. As to quaternary structure, heteromultimeric protein consisting of LacA and LacB.

The catalysed reaction is aldehydo-D-galactose 6-phosphate = keto-D-tagatose 6-phosphate. Its pathway is carbohydrate metabolism; D-galactose 6-phosphate degradation; D-tagatose 6-phosphate from D-galactose 6-phosphate: step 1/1. In Clostridium acetobutylicum (strain ATCC 824 / DSM 792 / JCM 1419 / IAM 19013 / LMG 5710 / NBRC 13948 / NRRL B-527 / VKM B-1787 / 2291 / W), this protein is Galactose-6-phosphate isomerase subunit LacB.